Here is a 212-residue protein sequence, read N- to C-terminus: ATP-dependent dethiobiotin synthetase BioD (212 aa).

Residue 13–18 (GIGKTV) coordinates ATP. Thr17 serves as a coordination point for Mg(2+). Lys33 is an active-site residue. Ser37 is a substrate binding site. Glu100 is a Mg(2+) binding site. ATP contacts are provided by residues 100-103 (EGAG) and 184-186 (PLL).

The protein belongs to the dethiobiotin synthetase family. In terms of assembly, homodimer. It depends on Mg(2+) as a cofactor.

It is found in the cytoplasm. The catalysed reaction is (7R,8S)-7,8-diammoniononanoate + CO2 + ATP = (4R,5S)-dethiobiotin + ADP + phosphate + 3 H(+). Its pathway is cofactor biosynthesis; biotin biosynthesis; biotin from 7,8-diaminononanoate: step 1/2. Functionally, catalyzes a mechanistically unusual reaction, the ATP-dependent insertion of CO2 between the N7 and N8 nitrogen atoms of 7,8-diaminopelargonic acid (DAPA, also called 7,8-diammoniononanoate) to form a ureido ring. This chain is ATP-dependent dethiobiotin synthetase BioD, found in Brucella canis (strain ATCC 23365 / NCTC 10854 / RM-666).